A 316-amino-acid polypeptide reads, in one-letter code: Ribosomal RNA small subunit methyltransferase H (316 aa).

Residues Ser-35–His-37, Asp-55, Phe-84, Asp-105, and Gln-112 contribute to the S-adenosyl-L-methionine site.

This sequence belongs to the methyltransferase superfamily. RsmH family.

The protein resides in the cytoplasm. It carries out the reaction cytidine(1402) in 16S rRNA + S-adenosyl-L-methionine = N(4)-methylcytidine(1402) in 16S rRNA + S-adenosyl-L-homocysteine + H(+). Functionally, specifically methylates the N4 position of cytidine in position 1402 (C1402) of 16S rRNA. The chain is Ribosomal RNA small subunit methyltransferase H from Streptococcus pyogenes serotype M49 (strain NZ131).